Here is a 363-residue protein sequence, read N- to C-terminus: tRNA/tmRNA (uracil-C(5))-methyltransferase (363 aa).

The S-adenosyl-L-methionine site is built by glutamine 187, tyrosine 215, asparagine 220, glutamate 236, and aspartate 296. Cysteine 321 functions as the Nucleophile in the catalytic mechanism. Catalysis depends on glutamate 355, which acts as the Proton acceptor.

Belongs to the class I-like SAM-binding methyltransferase superfamily. RNA M5U methyltransferase family. TrmA subfamily.

It catalyses the reaction uridine(54) in tRNA + S-adenosyl-L-methionine = 5-methyluridine(54) in tRNA + S-adenosyl-L-homocysteine + H(+). It carries out the reaction uridine(341) in tmRNA + S-adenosyl-L-methionine = 5-methyluridine(341) in tmRNA + S-adenosyl-L-homocysteine + H(+). In terms of biological role, dual-specificity methyltransferase that catalyzes the formation of 5-methyluridine at position 54 (m5U54) in all tRNAs, and that of position 341 (m5U341) in tmRNA (transfer-mRNA). This chain is tRNA/tmRNA (uracil-C(5))-methyltransferase, found in Haemophilus influenzae (strain PittEE).